A 78-amino-acid chain; its full sequence is Keratin-associated protein 6-5 (78 aa).

The tract at residues 3-76 (GYYGNYYGGR…GSGYGSGFGY (74 aa)) is 25 X 2 AA repeats of G-[YCGS].

The protein belongs to the KRTAP type 6 family. In terms of assembly, interacts with hair keratins. As to expression, strong expression in narrowly defined pattern restricted to the lower and middle cortical regions of the hair shaft in both developing and cycling hair. During hair follicle regression (catagen), expression levels decrease until expression is no longer detectable in follicles at resting stage (telogen).

In the hair cortex, hair keratin intermediate filaments are embedded in an interfilamentous matrix, consisting of hair keratin-associated proteins (KRTAP), which are essential for the formation of a rigid and resistant hair shaft through their extensive disulfide bond cross-linking with abundant cysteine residues of hair keratins. The matrix proteins include the high-sulfur and high-glycine-tyrosine keratins. The chain is Keratin-associated protein 6-5 (Krtap6-5) from Mus musculus (Mouse).